We begin with the raw amino-acid sequence, 213 residues long: Large ribosomal subunit protein uL4 (213 aa).

The tract at residues 41–75 (GTASTKTRAEVSRSGKKMYSQKGTGNARHGDRSVP) is disordered.

The protein belongs to the universal ribosomal protein uL4 family. Part of the 50S ribosomal subunit.

One of the primary rRNA binding proteins, this protein initially binds near the 5'-end of the 23S rRNA. It is important during the early stages of 50S assembly. It makes multiple contacts with different domains of the 23S rRNA in the assembled 50S subunit and ribosome. In terms of biological role, forms part of the polypeptide exit tunnel. The chain is Large ribosomal subunit protein uL4 from Deinococcus geothermalis (strain DSM 11300 / CIP 105573 / AG-3a).